The chain runs to 252 residues: Ribosomal RNA small subunit methyltransferase J (252 aa).

S-adenosyl-L-methionine is bound by residues 104–105 (RD), 120–121 (ER), and aspartate 174.

The protein belongs to the methyltransferase superfamily. RsmJ family.

Its subcellular location is the cytoplasm. The enzyme catalyses guanosine(1516) in 16S rRNA + S-adenosyl-L-methionine = N(2)-methylguanosine(1516) in 16S rRNA + S-adenosyl-L-homocysteine + H(+). In terms of biological role, specifically methylates the guanosine in position 1516 of 16S rRNA. The chain is Ribosomal RNA small subunit methyltransferase J from Mannheimia succiniciproducens (strain KCTC 0769BP / MBEL55E).